Here is a 314-residue protein sequence, read N- to C-terminus: Acetyl-coenzyme A carboxylase carboxyl transferase subunit beta (314 aa).

Residues 24-293 (LWIKCPDTGQ…IDAAPEPSPA (270 aa)) form the CoA carboxyltransferase N-terminal domain. Positions 283–314 (EIDAAPEPSPAAEEPAEPMPAPEAAAPSAPPA) are disordered. Composition is skewed to low complexity over residues 284 to 295 (IDAAPEPSPAAE) and 304 to 314 (PEAAAPSAPPA).

This sequence belongs to the AccD/PCCB family. As to quaternary structure, acetyl-CoA carboxylase is a heterohexamer composed of biotin carboxyl carrier protein (AccB), biotin carboxylase (AccC) and two subunits each of ACCase subunit alpha (AccA) and ACCase subunit beta (AccD).

The protein localises to the cytoplasm. It carries out the reaction N(6)-carboxybiotinyl-L-lysyl-[protein] + acetyl-CoA = N(6)-biotinyl-L-lysyl-[protein] + malonyl-CoA. It functions in the pathway lipid metabolism; malonyl-CoA biosynthesis; malonyl-CoA from acetyl-CoA: step 1/1. Its function is as follows. Component of the acetyl coenzyme A carboxylase (ACC) complex. Biotin carboxylase (BC) catalyzes the carboxylation of biotin on its carrier protein (BCCP) and then the CO(2) group is transferred by the transcarboxylase to acetyl-CoA to form malonyl-CoA. The sequence is that of Acetyl-coenzyme A carboxylase carboxyl transferase subunit beta from Nitrobacter hamburgensis (strain DSM 10229 / NCIMB 13809 / X14).